The chain runs to 112 residues: MKVLDVLKKNKDYGRVCRRGKSVADRHIVMYFLDNNLGRCRYGFAVSRKIRSAVRRNRARRLLREACRLNKEKFPEGYDFVFMARRDMTDLKCQQVEESILKLLKRAEINRS.

This sequence belongs to the RnpA family. Consists of a catalytic RNA component (M1 or rnpB) and a protein subunit.

It carries out the reaction Endonucleolytic cleavage of RNA, removing 5'-extranucleotides from tRNA precursor.. RNaseP catalyzes the removal of the 5'-leader sequence from pre-tRNA to produce the mature 5'-terminus. It can also cleave other RNA substrates such as 4.5S RNA. The protein component plays an auxiliary but essential role in vivo by binding to the 5'-leader sequence and broadening the substrate specificity of the ribozyme. This chain is Ribonuclease P protein component, found in Pelotomaculum thermopropionicum (strain DSM 13744 / JCM 10971 / SI).